The sequence spans 103 residues: Small ribosomal subunit protein bS6c (103 aa).

Belongs to the bacterial ribosomal protein bS6 family.

The protein resides in the plastid. The protein localises to the chloroplast. Binds together with bS18 to 16S ribosomal RNA. The polypeptide is Small ribosomal subunit protein bS6c (Thalassiosira pseudonana (Marine diatom)).